Here is a 506-residue protein sequence, read N- to C-terminus: Maturase K (506 aa).

Belongs to the intron maturase 2 family. MatK subfamily.

The protein resides in the plastid. Its subcellular location is the chloroplast. Its function is as follows. Usually encoded in the trnK tRNA gene intron. Probably assists in splicing its own and other chloroplast group II introns. This Arabis alpina (Alpine rock-cress) protein is Maturase K.